The sequence spans 470 residues: D-serine/D-alanine/glycine transporter (470 aa).

12 consecutive transmembrane segments (helical) span residues 30–50 (LIAI…KTIS), 51–71 (LAGP…FFVM), 102–122 (FTGW…VVAI), 128–148 (FWFP…LLLV), 162–182 (FWFA…GLVM), 211–231 (LSGF…IELV), 256–276 (IIMF…WSSV), 283–303 (FVEL…NFVV), 350–370 (FSCI…SVIG), 371–391 (AFTM…TIIL), 413–433 (PLGK…LVLL), and 441–461 (QALL…LFIG).

It belongs to the amino acid-polyamine-organocation (APC) superfamily. Amino acid transporter (AAT) (TC 2.A.3.1) family.

It is found in the cell inner membrane. The catalysed reaction is D-alanine(in) + H(+)(in) = D-alanine(out) + H(+)(out). It carries out the reaction D-serine(out) + H(+)(out) = D-serine(in) + H(+)(in). It catalyses the reaction glycine(in) + H(+)(in) = glycine(out) + H(+)(out). The enzyme catalyses D-cycloserine(in) + H(+)(in) = D-cycloserine(out) + H(+)(out). Uptake of D-serine is inhibited by D-alanine, D-cycloserine, glycine and at high concentrations of D-threonine. Functionally, permease that is involved in the transport across the cytoplasmic membrane of D-alanine, D-serine and glycine. Is the only transporter of D-alanine. Transports D-serine less efficiently than DsdX. In addition, in minimal media, transports the broad spectrum antibiotic D-cycloserine into the cell. Transports D-cycloserine only in minimal media, and not in a complex medium, suggesting that CycA does not play a role in D-cycloserine transport when E.coli is grown in a complex or biologically relevant medium, probably due to competition from other CycA substrates present in the medium. The sequence is that of D-serine/D-alanine/glycine transporter (cycA) from Escherichia coli O6:H1 (strain CFT073 / ATCC 700928 / UPEC).